A 232-amino-acid chain; its full sequence is Ion-translocating oxidoreductase complex subunit E (232 aa).

The next 5 membrane-spanning stretches (helical) occupy residues 39–59 (LGLG…ISSL), 69–89 (IPIY…LINA), 92–112 (FGLY…CIVV), 125–145 (ALSA…MFVL), and 182–202 (PFLL…MLAV).

It belongs to the NqrDE/RnfAE family. In terms of assembly, the complex is composed of six subunits: RnfA, RnfB, RnfC, RnfD, RnfE and RnfG.

The protein resides in the cell inner membrane. Its function is as follows. Part of a membrane-bound complex that couples electron transfer with translocation of ions across the membrane. In Klebsiella pneumoniae (strain 342), this protein is Ion-translocating oxidoreductase complex subunit E.